Reading from the N-terminus, the 93-residue chain is Small ribosomal subunit protein bS6 (93 aa).

This sequence belongs to the bacterial ribosomal protein bS6 family.

In terms of biological role, binds together with bS18 to 16S ribosomal RNA. The polypeptide is Small ribosomal subunit protein bS6 (Phytoplasma australiense).